The following is a 220-amino-acid chain: Lactate utilization protein C (220 aa).

Belongs to the LutC/YkgG family.

Its function is as follows. Is involved in L-lactate degradation and allows cells to grow with lactate as the sole carbon source. This chain is Lactate utilization protein C, found in Anoxybacillus flavithermus (strain DSM 21510 / WK1).